The primary structure comprises 245 residues: 1-(5-phosphoribosyl)-5-[(5-phosphoribosylamino)methylideneamino] imidazole-4-carboxamide isomerase (245 aa).

The active-site Proton acceptor is the Asp7. The active-site Proton donor is the Asp129.

Belongs to the HisA/HisF family.

The protein resides in the cytoplasm. The enzyme catalyses 1-(5-phospho-beta-D-ribosyl)-5-[(5-phospho-beta-D-ribosylamino)methylideneamino]imidazole-4-carboxamide = 5-[(5-phospho-1-deoxy-D-ribulos-1-ylimino)methylamino]-1-(5-phospho-beta-D-ribosyl)imidazole-4-carboxamide. It functions in the pathway amino-acid biosynthesis; L-histidine biosynthesis; L-histidine from 5-phospho-alpha-D-ribose 1-diphosphate: step 4/9. The protein is 1-(5-phosphoribosyl)-5-[(5-phosphoribosylamino)methylideneamino] imidazole-4-carboxamide isomerase of Citrobacter koseri (strain ATCC BAA-895 / CDC 4225-83 / SGSC4696).